Reading from the N-terminus, the 538-residue chain is Aldehyde dehydrogenase family 2 member B4, mitochondrial (538 aa).

Residues 1–38 constitute a mitochondrion transit peptide; it reads MAARRVSSLLSRSFSASSPLLFRSQGRNCYNGGILRRF. 282 to 287 provides a ligand contact to NAD(+); that stretch reads GSTDTG. E305 functions as the Proton acceptor in the catalytic mechanism. Residue C339 is the Nucleophile of the active site.

Belongs to the aldehyde dehydrogenase family. As to quaternary structure, homotetramer.

Its subcellular location is the mitochondrion matrix. The enzyme catalyses an aldehyde + NAD(+) + H2O = a carboxylate + NADH + 2 H(+). In terms of biological role, possesses activity on acetaldehyde and glycolaldehyde in vitro. This is Aldehyde dehydrogenase family 2 member B4, mitochondrial (ALDH2B4) from Arabidopsis thaliana (Mouse-ear cress).